We begin with the raw amino-acid sequence, 857 residues long: Protein sip-5 (857 aa).

6 disordered regions span residues 1–81, 157–231, 384–416, 466–517, 545–747, and 763–857; these read MGNA…ARRL, GLPI…FKPT, SESS…APNV, FGRR…GNRR, KAEK…PMFN, and HAGK…QVTL. Composition is skewed to basic and acidic residues over residues 7–16 and 36–48; these read KESRGDDSGR and ESSR…RHDL. Residues 49 to 61 are compositionally biased toward low complexity; the sequence is TGLLGRAAGGSSS. Positions 62-81 are enriched in basic and acidic residues; sequence HADERHERKETKQEREARRL. Polar residues-rich tracts occupy residues 179-191 and 199-208; these read ASPT…TNHL and SLSTASEHST. Composition is skewed to low complexity over residues 209 to 230, 384 to 394, and 476 to 504; these read SNAG…PFKP, SESSVNSGSLS, and SASA…TANT. A compositionally biased stretch (basic and acidic residues) spans 545-572; the sequence is KAEKEEQKEAKKREKEREKAEKKAEKAA. Low complexity-rich tracts occupy residues 586-604 and 621-645; these read SRSG…PGLS and ASVA…ALAP. Over residues 648-657 the composition is skewed to basic and acidic residues; that stretch reads STKDKGKAVD. The segment covering 688–697 has biased composition (low complexity); the sequence is SSASSASSSA. Over residues 698–712 the composition is skewed to polar residues; it reads VESNQGSYVPPSNLQ. Residues 783-799 show a composition bias toward basic and acidic residues; the sequence is ETAKSGEGAGEHVEHVL. 2 stretches are compositionally biased toward polar residues: residues 800–838 and 845–857; these read DSQT…STAS and NETT…QVTL.

It belongs to the SIP5 family.

Its subcellular location is the cytoplasm. May negatively regulate the snf-1 kinase. The protein is Protein sip-5 (sip-5) of Neurospora crassa (strain ATCC 24698 / 74-OR23-1A / CBS 708.71 / DSM 1257 / FGSC 987).